A 91-amino-acid polypeptide reads, in one-letter code: Non-specific lipid-transfer protein 1 (91 aa).

Cystine bridges form between C3–C50, C13–C27, C28–C73, and C48–C87.

This sequence belongs to the plant LTP family.

In terms of biological role, plant non-specific lipid-transfer proteins transfer phospholipids as well as galactolipids across membranes. May play a role in wax or cutin deposition in the cell walls of expanding epidermal cells and certain secretory tissues. This is Non-specific lipid-transfer protein 1 from Prunus domestica (Garden plum).